A 41-amino-acid chain; its full sequence is Photosystem I reaction center subunit IX (41 aa).

The chain crosses the membrane as a helical span at residues 7 to 27; the sequence is YLSTAPVLLTLWMTFTAGFII.

The protein belongs to the PsaJ family.

The protein localises to the plastid. It is found in the chloroplast thylakoid membrane. In terms of biological role, may help in the organization of the PsaE and PsaF subunits. The polypeptide is Photosystem I reaction center subunit IX (Trieres chinensis (Marine centric diatom)).